The chain runs to 355 residues: Protein RecA (355 aa).

67-74 (GPESSGKT) contacts ATP. The segment at 336 to 355 (NSAASDYEDNENEEMNNEEF) is disordered. Acidic residues predominate over residues 341–355 (DYEDNENEEMNNEEF).

It belongs to the RecA family.

Its subcellular location is the cytoplasm. Its function is as follows. Can catalyze the hydrolysis of ATP in the presence of single-stranded DNA, the ATP-dependent uptake of single-stranded DNA by duplex DNA, and the ATP-dependent hybridization of homologous single-stranded DNAs. It interacts with LexA causing its activation and leading to its autocatalytic cleavage. The sequence is that of Protein RecA from Photorhabdus laumondii subsp. laumondii (strain DSM 15139 / CIP 105565 / TT01) (Photorhabdus luminescens subsp. laumondii).